The following is a 198-amino-acid chain: Glycerol-3-phosphate acyltransferase 2 (198 aa).

The next 4 helical transmembrane spans lie at 4-24, 71-91, 113-133, and 147-167; these read TYLL…LVVG, LPMV…AVLG, LLCY…TLLF, and VVAV…AMCL.

Belongs to the PlsY family. In terms of assembly, probably interacts with PlsX.

Its subcellular location is the cell membrane. It catalyses the reaction an acyl phosphate + sn-glycerol 3-phosphate = a 1-acyl-sn-glycero-3-phosphate + phosphate. Its pathway is lipid metabolism; phospholipid metabolism. In terms of biological role, catalyzes the transfer of an acyl group from acyl-phosphate (acyl-PO(4)) to glycerol-3-phosphate (G3P) to form lysophosphatidic acid (LPA). This enzyme utilizes acyl-phosphate as fatty acyl donor, but not acyl-CoA or acyl-ACP. This is Glycerol-3-phosphate acyltransferase 2 from Bacillus cereus (strain ZK / E33L).